A 304-amino-acid polypeptide reads, in one-letter code: Quinolinate synthase (304 aa).

Iminosuccinate contacts are provided by His24 and Ser41. Position 86 (Cys86) interacts with [4Fe-4S] cluster. Iminosuccinate is bound by residues Tyr112–Asn114 and Ser129. Cys171 serves as a coordination point for [4Fe-4S] cluster. Residues His197–Glu199 and Thr214 contribute to the iminosuccinate site. Position 259 (Cys259) interacts with [4Fe-4S] cluster.

It belongs to the quinolinate synthase family. Type 2 subfamily. [4Fe-4S] cluster is required as a cofactor.

It is found in the cytoplasm. The catalysed reaction is iminosuccinate + dihydroxyacetone phosphate = quinolinate + phosphate + 2 H2O + H(+). Its pathway is cofactor biosynthesis; NAD(+) biosynthesis; quinolinate from iminoaspartate: step 1/1. Functionally, catalyzes the condensation of iminoaspartate with dihydroxyacetone phosphate to form quinolinate. This Geotalea uraniireducens (strain Rf4) (Geobacter uraniireducens) protein is Quinolinate synthase.